We begin with the raw amino-acid sequence, 142 residues long: MIIGLGSDLMDIRRIEKSIERFGDRFIQRVFTEIEQAKSDKRRMRAASYAKRFAAKEAGAKALGTGIARGVSWKEIGVVNLPSGKPTLEFKGRALERALALTPHGHEPFAHITITDDHPWAQAFVVLEARPIGHHFDGLAHG.

Positions 8 and 57 each coordinate Mg(2+).

It belongs to the P-Pant transferase superfamily. AcpS family. Requires Mg(2+) as cofactor.

It is found in the cytoplasm. It carries out the reaction apo-[ACP] + CoA = holo-[ACP] + adenosine 3',5'-bisphosphate + H(+). Its function is as follows. Transfers the 4'-phosphopantetheine moiety from coenzyme A to a Ser of acyl-carrier-protein. This Maricaulis maris (strain MCS10) (Caulobacter maris) protein is Holo-[acyl-carrier-protein] synthase.